The primary structure comprises 201 residues: Arachin 25 kDa protein (201 aa).

In terms of assembly, this is one of six apparently different protein chains that constitute the peanut protein arachin.

The chain is Arachin 25 kDa protein from Arachis hypogaea (Peanut).